A 1400-amino-acid polypeptide reads, in one-letter code: MKDLLNFLKAQHKTEEFDAIKIGLSSPDMIRSWSFGEVKKPETINYRTFKPERDGLFCARIFGPVKDYECLCGKYKRLKHRGVICEKCGVEVTQTKVRRDRMGHIELASPVAHIWFLKSLPSRIGLLMDIPLRDIERVLYFEMYVVTEPGMTDLEKSQMLTEEEYLDRLEEWGDEFTAKMGAEAIKDLLGSMDLHAEVEQMREELDTTNSETKRKKLTKRLKLVEAFISSGNNPEWMILTVLPVLPPDLRPLVPLDGGRFATSDLNDLYRRVINRNNRLKRLLELAAPDIIVRNEKRMLQESVDALLDNGRRGRAITGSNKRPLKSLADMIKGKQGRFRQNLLGKRVDYSGRSVITVGPYLRLHQCGLPKKMALELFKPFIYSKLETRGLATTIKAAKKMVEREEAVVWDILDEVIREHPVLLNRAPTLHRLGIQAFEPVLIEGKAIQLHPLVCAAYNADFDGDQMAVHVPLTLEAQLEARTLMMSTNNILSPASGDPIIVPSQDVVLGLYYMTREMINAKGEGMYLAGPAEAEKAYRTKTAALHARVKVRITETVVDEDGHSTTETKMVDTTIGRAMLWQIVPKGLPFSIVNQKLGKKQISNLLNEAYRKLGLKDTVIFADQIMYTGFAYAALSGVSVGIDDMVVPPAKYTEIAEAEEEVREIQEQYQSGLVTAGERYNKVIDIWASTNDRVAKAMMENLSSETVINRDGEEEQQESFNSIYMMADSGARGSAAQIRQLAGMRGLMARPDGSIIETPITANFKEGLNVLQYFISTHGARKGLADTALKTANSGYLTRRLVDVAQDVVVTEHDCGTLEGVEMMPHIEGGDVKVALTELALGRVVAEDIVKPGTEEILIPRNTLLDEKWCQIINDNSVDKITVRSVVTCDSDFGCCAQCYGRDLARGHLVNQGEAVGVIAAQSIGEPGTQLTMRTFHIGGAASTAAAENSVQVKNNGSVKLNNAKFVINKDGKLVITSRASELTIIDEFGRTKEKHKLPYGSSLSKADGDAVTAGETVANWEAHTMPIITEVAGRVQFVDMIDGVTVSRQTDDLTGLSSSEVTDAAARPAAGKDMRPAIKLVDAAGNDVMIPGTDMPAQYFLPGKAIVNIEDGAEVGIGDTLARIPQKSGGNKDITGGLPRVADLFEARKPKEPAILAEYSGTVSFGKETKGKRRLIITREGGETYEEMIPKHRQLNVFEGERVERGDVIADGPEAPHDILRLRGIHAVTQYIANEVQEVYRLQGVKINDKHIETIVRQMLRKCTITHAGDSEFLPGETVEYSQVKIANRNLEAEGKEPARFERELLGITKASLATESFISAASFQETTRVLTEAAVSGKRDDLRGLKENVIVGRLIPAGTGFAYHQDRQAKRAQEQEGPSAAQATDNLAALLNAGFSSDE.

Residues Cys70, Cys72, Cys85, and Cys88 each coordinate Zn(2+). Mg(2+) is bound by residues Asp460, Asp462, and Asp464. Residues Cys814, Cys888, Cys895, and Cys898 each contribute to the Zn(2+) site.

This sequence belongs to the RNA polymerase beta' chain family. The RNAP catalytic core consists of 2 alpha, 1 beta, 1 beta' and 1 omega subunit. When a sigma factor is associated with the core the holoenzyme is formed, which can initiate transcription. It depends on Mg(2+) as a cofactor. Zn(2+) is required as a cofactor.

The catalysed reaction is RNA(n) + a ribonucleoside 5'-triphosphate = RNA(n+1) + diphosphate. Functionally, DNA-dependent RNA polymerase catalyzes the transcription of DNA into RNA using the four ribonucleoside triphosphates as substrates. The polypeptide is DNA-directed RNA polymerase subunit beta' (Vibrio vulnificus (strain CMCP6)).